A 384-amino-acid polypeptide reads, in one-letter code: Cytochrome b (384 aa).

4 consecutive transmembrane segments (helical) span residues 32–52 (FGSLLGVCLVMQLCTGMFLAM), 76–98 (WLLRYAHSNGAGFFFMFVYLHMA), 113–133 (LWNMGVMMFLLMMMTAFMGYC), and 179–199 (FFSLHYLLPFVIAGICCLHLL). Heme b contacts are provided by H82 and H96. The heme b site is built by H183 and H197. H202 contacts a ubiquinone. The next 4 helical transmembrane spans lie at 225-245 (FLFKDTVTIFAFLFVYFFLIS), 289-309 (MMGVLAMLFAILILFVLPFVD), 321-341 (LSKILFGFFCVNFILLGLIGA), and 348-368 (YIIIGQLATIFYFSYFMILLP).

This sequence belongs to the cytochrome b family. In terms of assembly, fungal cytochrome b-c1 complex contains 10 subunits; 3 respiratory subunits, 2 core proteins and 5 low-molecular weight proteins. Cytochrome b-c1 complex is a homodimer. It depends on heme b as a cofactor.

It localises to the mitochondrion inner membrane. Component of the ubiquinol-cytochrome c reductase complex (complex III or cytochrome b-c1 complex) that is part of the mitochondrial respiratory chain. The b-c1 complex mediates electron transfer from ubiquinol to cytochrome c. Contributes to the generation of a proton gradient across the mitochondrial membrane that is then used for ATP synthesis. This Starmerella bacillaris (Yeast) protein is Cytochrome b (COB).